The primary structure comprises 382 residues: Histidinol-phosphate aminotransferase (382 aa).

Lys-215 carries the post-translational modification N6-(pyridoxal phosphate)lysine. Residues 360-382 (NSNNIDNQSKTHSQTSSIRKGTI) form a disordered region.

This sequence belongs to the class-II pyridoxal-phosphate-dependent aminotransferase family. Histidinol-phosphate aminotransferase subfamily. As to quaternary structure, homodimer. Requires pyridoxal 5'-phosphate as cofactor.

The catalysed reaction is L-histidinol phosphate + 2-oxoglutarate = 3-(imidazol-4-yl)-2-oxopropyl phosphate + L-glutamate. It participates in amino-acid biosynthesis; L-histidine biosynthesis; L-histidine from 5-phospho-alpha-D-ribose 1-diphosphate: step 7/9. The sequence is that of Histidinol-phosphate aminotransferase from Yersinia pseudotuberculosis serotype IB (strain PB1/+).